The primary structure comprises 437 residues: Methylenetetrahydrofolate--tRNA-(uracil-5-)-methyltransferase TrmFO (437 aa).

9 to 14 (GGGLAG) is a binding site for FAD.

The protein belongs to the MnmG family. TrmFO subfamily. Requires FAD as cofactor.

The protein resides in the cytoplasm. The catalysed reaction is uridine(54) in tRNA + (6R)-5,10-methylene-5,6,7,8-tetrahydrofolate + NADH + H(+) = 5-methyluridine(54) in tRNA + (6S)-5,6,7,8-tetrahydrofolate + NAD(+). It carries out the reaction uridine(54) in tRNA + (6R)-5,10-methylene-5,6,7,8-tetrahydrofolate + NADPH + H(+) = 5-methyluridine(54) in tRNA + (6S)-5,6,7,8-tetrahydrofolate + NADP(+). In terms of biological role, catalyzes the folate-dependent formation of 5-methyl-uridine at position 54 (M-5-U54) in all tRNAs. This chain is Methylenetetrahydrofolate--tRNA-(uracil-5-)-methyltransferase TrmFO, found in Moorella thermoacetica (strain ATCC 39073 / JCM 9320).